The following is a 312-amino-acid chain: Homoserine O-acetyltransferase (312 aa).

Cys-142 acts as the Acyl-thioester intermediate in catalysis. Substrate contacts are provided by Lys-163 and Ser-192. His-235 serves as the catalytic Proton acceptor. Glu-237 is an active-site residue. Arg-249 contributes to the substrate binding site.

Belongs to the MetA family.

It is found in the cytoplasm. The catalysed reaction is L-homoserine + acetyl-CoA = O-acetyl-L-homoserine + CoA. Its pathway is amino-acid biosynthesis; L-methionine biosynthesis via de novo pathway; O-acetyl-L-homoserine from L-homoserine: step 1/1. In terms of biological role, transfers an acetyl group from acetyl-CoA to L-homoserine, forming acetyl-L-homoserine. In Ruegeria pomeroyi (strain ATCC 700808 / DSM 15171 / DSS-3) (Silicibacter pomeroyi), this protein is Homoserine O-acetyltransferase.